Reading from the N-terminus, the 190-residue chain is Ribosome hibernation promotion factor (190 aa).

The protein belongs to the HPF/YfiA ribosome-associated protein family. Long HPF subfamily. As to quaternary structure, interacts with 100S ribosomes.

Its subcellular location is the cytoplasm. In terms of biological role, required for dimerization of active 70S ribosomes into 100S ribosomes in stationary phase; 100S ribosomes are translationally inactive and sometimes present during exponential growth. This Staphylococcus saprophyticus subsp. saprophyticus (strain ATCC 15305 / DSM 20229 / NCIMB 8711 / NCTC 7292 / S-41) protein is Ribosome hibernation promotion factor.